Consider the following 260-residue polypeptide: Flap endonuclease Xni (260 aa).

Residue aspartate 105 coordinates Mg(2+). The region spanning 164–254 (SQFLDLLALA…LKDFRVNGPA (91 aa)) is the 5'-3' exonuclease domain. The K(+) site is built by leucine 172, alanine 173, proline 181, isoleucine 183, and isoleucine 186. An interaction with DNA region spans residues 185 to 190 (GIGPKS).

The protein belongs to the Xni family. Requires Mg(2+) as cofactor. K(+) serves as cofactor.

Has flap endonuclease activity. During DNA replication, flap endonucleases cleave the 5'-overhanging flap structure that is generated by displacement synthesis when DNA polymerase encounters the 5'-end of a downstream Okazaki fragment. This chain is Flap endonuclease Xni, found in Shewanella sp. (strain ANA-3).